The primary structure comprises 430 residues: Enolase (430 aa).

Residue Q164 participates in (2R)-2-phosphoglycerate binding. The active-site Proton donor is E206. Mg(2+)-binding residues include D243, E288, and D315. (2R)-2-phosphoglycerate-binding residues include K340, R369, S370, and K391. Residue K340 is the Proton acceptor of the active site.

It belongs to the enolase family. Mg(2+) is required as a cofactor.

It localises to the cytoplasm. Its subcellular location is the secreted. The protein resides in the cell surface. It catalyses the reaction (2R)-2-phosphoglycerate = phosphoenolpyruvate + H2O. The protein operates within carbohydrate degradation; glycolysis; pyruvate from D-glyceraldehyde 3-phosphate: step 4/5. Functionally, catalyzes the reversible conversion of 2-phosphoglycerate (2-PG) into phosphoenolpyruvate (PEP). It is essential for the degradation of carbohydrates via glycolysis. This is Enolase from Lysinibacillus sphaericus (strain C3-41).